Reading from the N-terminus, the 756-residue chain is Disintegrin and metalloproteinase domain-containing protein 5 (756 aa).

The first 16 residues, 1–16 (MFLLLVLLTGLGGMHA), serve as a signal peptide directing secretion. Positions 17-142 (DLNPHKTFLQ…AVSGFIHKIY (126 aa)) are excised as a propeptide. The Extracellular portion of the chain corresponds to 17 to 698 (DLNPHKTFLQ…GRHAPFQKQR (682 aa)). In terms of domain architecture, Peptidase M12B spans 183-380 (RYIEMHIVVD…NGLTCLQTNP (198 aa)). 4 disulfides stabilise this stretch: cysteine 292/cysteine 375, cysteine 334/cysteine 359, cysteine 336/cysteine 341, and cysteine 449/cysteine 470. In terms of domain architecture, Disintegrin spans 389 to 478 (RRICGNGLLE…YCLLDTYVRD (90 aa)). Asparagine 559 carries N-linked (GlcNAc...) asparagine glycosylation. Residues 630–664 (DFETCEASIECSGHGICNNFNHCHCEKGYNPPHCK) enclose the EGF-like domain. 3 disulfide bridges follow: cysteine 634/cysteine 646, cysteine 640/cysteine 652, and cysteine 654/cysteine 663. Residues 699–719 (FQLIFYISLPVLIITTAILIK) form a helical membrane-spanning segment. At 720-756 (RKKLRELCYRGETESESSVSQESSSNSKSSLSESTSL) the chain is on the cytoplasmic side. Residues 731–756 (ETESESSVSQESSSNSKSSLSESTSL) form a disordered region. Over residues 735–756 (ESSVSQESSSNSKSSLSESTSL) the composition is skewed to low complexity.

As to quaternary structure, interacts with TEX101. In terms of processing, subject to proteolytic processing during epididymal transit of spermatozoa. As to expression, detected in testis (at protein level). Detected in adult and prepubertal testis. Detected at very low levels in heart, kidney, brain, muscle ovary and uterus.

The protein localises to the membrane. Its function is as follows. This is a non catalytic metalloprotease-like protein. May play a role in sperm-egg fusion. The polypeptide is Disintegrin and metalloproteinase domain-containing protein 5 (ADAM5) (Macaca fascicularis (Crab-eating macaque)).